Consider the following 370-residue polypeptide: 5-hydroxytryptamine receptor 5B (370 aa).

Positions 1–36 are disordered; it reads MEVSNLSGATPGIAFPPGPESCSDSPSSGRSMGSTP. The Extracellular portion of the chain corresponds to 1–48; that stretch reads MEVSNLSGATPGIAFPPGPESCSDSPSSGRSMGSTPGGLILSGREPPF. N5 carries an N-linked (GlcNAc...) asparagine glycan. Over residues 20–36 the composition is skewed to low complexity; sequence ESCSDSPSSGRSMGSTP. A helical membrane pass occupies residues 49–75; sequence SAFTVLVVTLLVLLIAATFLWNLLVLV. Over 76–88 the chain is Cytoplasmic; sequence TILRVRAFHRVPH. Residues 89-115 form a helical membrane-spanning segment; that stretch reads NLVASTAVSDVLVAALVMPLSLVSELS. Residues 116 to 127 lie on the Extracellular side of the membrane; sequence AGRRWQLGRSLC. A disulfide bond links C127 and C205. Residues 128–150 traverse the membrane as a helical segment; it reads HVWISFDVLCCTASIWNVAAIAL. D134 serves as a coordination point for serotonin. Over 151-168 the chain is Cytoplasmic; sequence DRYWTITRHLQYTLRTRR. The helical transmembrane segment at 169–189 threads the bilayer; that stretch reads RASALMIAITWALSALIALAP. Topologically, residues 190–211 are extracellular; the sequence is LLFGWGEAYDARLQRCQVSQEP. The helical transmembrane segment at 212 to 233 threads the bilayer; that stretch reads SYAVFSTCGAFYVPLAVVLFVY. Topologically, residues 234–300 are cytoplasmic; the sequence is WKIYKAAKFR…QKEKRAAMMV (67 aa). Residues 301–325 traverse the membrane as a helical segment; the sequence is GILIGVFVLCWIPFFLTELVSPLCA. The Extracellular portion of the chain corresponds to 326 to 327; that stretch reads CS. The chain crosses the membrane as a helical span at residues 328–352; the sequence is LPPIWKSIFLWLGYSNSFFNPLIYT. Topologically, residues 353-370 are cytoplasmic; sequence AFNKNYNNAFKSLFTKQR.

The protein belongs to the G-protein coupled receptor 1 family. As to expression, brain; in the CA1 region of hippocampus, the medial habenula, and raphe nuclei.

It is found in the cell membrane. In terms of biological role, G-protein coupled receptor for 5-hydroxytryptamine (serotonin), a biogenic hormone that functions as a neurotransmitter, a hormone and a mitogen. Also functions as a receptor for ergot alkaloid derivatives and other psychoactive substances. Ligand binding causes a conformation change that triggers signaling via guanine nucleotide-binding proteins (G proteins) and modulates the activity of downstream effectors. Htr5b is coupled to G(i)/G(o) G alpha proteins and mediates inhibitory neurotransmission: signaling inhibits adenylate cyclase activity and activates a phosphatidylinositol-calcium second messenger system that regulates the release of Ca(2+) ions from intracellular stores. The polypeptide is 5-hydroxytryptamine receptor 5B (Rattus norvegicus (Rat)).